Reading from the N-terminus, the 340-residue chain is Outer membrane protein U (340 aa).

An N-terminal signal peptide occupies residues Met-1–Ala-21.

Belongs to the Gram-negative porin family. As to quaternary structure, homotrimer.

The protein resides in the cell outer membrane. In terms of biological role, forms pores that allow passive diffusion of small molecules across the outer membrane. The chain is Outer membrane protein U (ompU) from Vibrio vulnificus (strain CMCP6).